The chain runs to 718 residues: Methionine--tRNA ligase (718 aa).

The 'HIGH' region motif lies at 27–37 (PYANGQIHIGH). Residues C158, C161, C171, and C174 each contribute to the Zn(2+) site. A 'KMSKS' region motif is present at residues 348-352 (KMSKS). K351 serves as a coordination point for ATP. Residues 612–718 (DFAKIDLRIA…SGAKPGMRVK (107 aa)) enclose the tRNA-binding domain.

Belongs to the class-I aminoacyl-tRNA synthetase family. MetG type 1 subfamily. In terms of assembly, homodimer. The cofactor is Zn(2+).

It is found in the cytoplasm. It catalyses the reaction tRNA(Met) + L-methionine + ATP = L-methionyl-tRNA(Met) + AMP + diphosphate. Its function is as follows. Is required not only for elongation of protein synthesis but also for the initiation of all mRNA translation through initiator tRNA(fMet) aminoacylation. In Burkholderia orbicola (strain AU 1054), this protein is Methionine--tRNA ligase.